Here is a 993-residue protein sequence, read N- to C-terminus: DNA-binding protein SMUBP-2 (993 aa).

Ala2 is modified (N-acetylalanine). ATP is bound by residues 214 to 221 (GPPGTGKT), Gln403, Tyr442, and Glu571. Residues 638-785 (TAFEYLDDIV…KRRFITVSKR (148 aa)) are SS DNA-binding. Disordered regions lie at residues 651–723 (YSHE…VESQ), 782–828 (VSKR…PDQP), and 841–879 (VRSA…DLPT). Composition is skewed to polar residues over residues 653-662 (HENSQGSSHA) and 669-681 (PATS…QRQE). In terms of domain architecture, R3H spans 723-786 (QDGVDHFRAM…RRFITVSKRA (64 aa)). Over residues 818-828 (PPREQRGPDQP) the composition is skewed to basic and acidic residues. Residues 842 to 859 (RSAQGQPASKEQQASGQQ) show a composition bias toward polar residues. The short motif at 864-868 (KKKKK) is the Nuclear localization signal element. The segment at 891–940 (VKADNTCGFAKCTAGVTTLGQFCQLCSRRYCLSHHLPEIHGCGERARAHA) adopts an AN1-type zinc-finger fold. Residues Cys897, Cys902, Cys913, Cys916, Cys921, His924, His930, and Cys932 each contribute to the Zn(2+) site. Positions 971 to 993 (RRLDKKLSELSNQRTSRRKERGT) are disordered.

Belongs to the DNA2/NAM7 helicase family. In terms of assembly, homooligomer. Interacts with RUVBL1. Interacts with RUVBL2. Interacts with GTF3C1. Interacts with ABT1. Interacts with ribosomes. In terms of tissue distribution, expressed in all tissues examined. Expressed in the developing and adult human brain, with highest expression in the cerebellum. Moderately expressed in fibroblasts.

The protein localises to the nucleus. The protein resides in the cytoplasm. Its subcellular location is the cell projection. It localises to the axon. It carries out the reaction ATP + H2O = ADP + phosphate + H(+). Its function is as follows. 5' to 3' helicase that unwinds RNA and DNA duplexes in an ATP-dependent reaction. Specific to 5'-phosphorylated single-stranded guanine-rich sequences. May play a role in RNA metabolism, ribosome biogenesis or initiation of translation. May play a role in regulation of transcription. Interacts with tRNA-Tyr. This chain is DNA-binding protein SMUBP-2 (IGHMBP2), found in Homo sapiens (Human).